A 208-amino-acid chain; its full sequence is Large ribosomal subunit protein uL4 (208 aa).

Residues Arg45–Val89 are disordered.

It belongs to the universal ribosomal protein uL4 family. As to quaternary structure, part of the 50S ribosomal subunit.

One of the primary rRNA binding proteins, this protein initially binds near the 5'-end of the 23S rRNA. It is important during the early stages of 50S assembly. It makes multiple contacts with different domains of the 23S rRNA in the assembled 50S subunit and ribosome. Its function is as follows. Forms part of the polypeptide exit tunnel. In Lactococcus lactis subsp. cremoris (strain SK11), this protein is Large ribosomal subunit protein uL4.